Consider the following 431-residue polypeptide: Putative serine/threonine-protein kinase B (431 aa).

The Protein kinase domain occupies 20 to 279 (YLNKGIVGLG…VRENFQIPYI (260 aa)). ATP contacts are provided by residues 26–34 (VGLGSYGEG) and Lys-49. Asp-147 acts as the Proton acceptor in catalysis. A PH domain is found at 331-429 (DVTHRGHVNK…WVHAIQRGIG (99 aa)).

The protein belongs to the protein kinase superfamily. Ser/Thr protein kinase family.

It catalyses the reaction L-seryl-[protein] + ATP = O-phospho-L-seryl-[protein] + ADP + H(+). It carries out the reaction L-threonyl-[protein] + ATP = O-phospho-L-threonyl-[protein] + ADP + H(+). The polypeptide is Putative serine/threonine-protein kinase B (NRKB) (Trypanosoma brucei brucei).